A 599-amino-acid polypeptide reads, in one-letter code: Elongation factor 4 (599 aa).

Positions 5–187 (SHIRNFSIIA…HLVRVIPPPQ (183 aa)) constitute a tr-type G domain. Residues 17 to 22 (DHGKST) and 134 to 137 (NKMD) contribute to the GTP site.

Belongs to the TRAFAC class translation factor GTPase superfamily. Classic translation factor GTPase family. LepA subfamily.

Its subcellular location is the cell inner membrane. The enzyme catalyses GTP + H2O = GDP + phosphate + H(+). Its function is as follows. Required for accurate and efficient protein synthesis under certain stress conditions. May act as a fidelity factor of the translation reaction, by catalyzing a one-codon backward translocation of tRNAs on improperly translocated ribosomes. Back-translocation proceeds from a post-translocation (POST) complex to a pre-translocation (PRE) complex, thus giving elongation factor G a second chance to translocate the tRNAs correctly. Binds to ribosomes in a GTP-dependent manner. The polypeptide is Elongation factor 4 (Azotobacter vinelandii (strain DJ / ATCC BAA-1303)).